The primary structure comprises 196 residues: MADGQMPFPCHYTSRRRRDPFRDSPLSSRLLDDGFGMDPFPDDLTASWPDWALPRLSSAWPGTLRSGMVPRGPTAMTRFGVPAEGRSPPPFPGEPWKVCVNVHSFKPEELMVKTKDGYVEVSGKHEEKQQEGGIVSKNFTKKIQLPAEVDPVTVFASLSPEGLLIIEAPQVPPYSPFGESSFNNELPQDGQEVTCT.

Residues 1–34 (MADGQMPFPCHYTSRRRRDPFRDSPLSSRLLDDG) form a disordered region. A compositionally biased stretch (low complexity) spans 23–34 (DSPLSSRLLDDG). Phosphoserine is present on residues S24 and S57. T63 is subject to Phosphothreonine. Residues R71 and R78 each carry the asymmetric dimethylarginine modification. A sHSP domain is found at 74–185 (TAMTRFGVPA…PFGESSFNNE (112 aa)). A Phosphoserine modification is found at S87. Residues 176–196 (PFGESSFNNELPQDGQEVTCT) form a disordered region. The segment covering 178–196 (GESSFNNELPQDGQEVTCT) has biased composition (polar residues).

Belongs to the small heat shock protein (HSP20) family. Monomer. Forms a ternary complex with BAG3 and HSPA1A. Component of the chaperone-assisted selective autophagy (CASA) complex consisting of BAG3, HSPA8/HSC70, HSPB8 and STUB1/CHIP. Interacts with HSPB1. Interacts with DNAJB6. Interacts with BAG3. Phosphorylated.

Its subcellular location is the cytoplasm. The protein localises to the nucleus. Functionally, involved in the chaperone-assisted selective autophagy (CASA), a crucial process for protein quality control, particularly in mechanical strained cells and tissues such as muscle. Displays temperature-dependent chaperone activity. The polypeptide is Heat shock protein beta-8 (HSPB8) (Bos taurus (Bovine)).